A 734-amino-acid polypeptide reads, in one-letter code: Exonuclease 1 (734 aa).

The N-domain stretch occupies residues 1–99 (MGIQGLLQFL…KARREKRQTN (99 aa)). Aspartate 30, aspartate 78, glutamate 150, aspartate 152, aspartate 171, aspartate 173, and aspartate 225 together coordinate Mg(2+). An I-domain region spans residues 138 to 229 (RSEGVDYIVA…ILSGCDYLPS (92 aa)). Disordered regions lie at residues 599-650 (EAEN…CQFT), 656-675 (AHQS…KVPG), and 685-716 (GLRT…NENV). Residues 604–620 (PSWQSSCIKSDTVSQID) show a composition bias toward polar residues. Over residues 621 to 641 (SNEKLLKKQDIEDTDSDEHAS) the composition is skewed to basic and acidic residues. Over residues 700–715 (GLTNRSNTKATRNNEN) the composition is skewed to polar residues.

This sequence belongs to the XPG/RAD2 endonuclease family. EXO1 subfamily. Mg(2+) serves as cofactor.

The protein resides in the nucleus. 5'-&gt;3' double-stranded DNA exonuclease which may also contain a cryptic 3'-&gt;5' double-stranded DNA exonuclease activity. Also exhibits endonuclease activity against 5'-overhanging flap structures similar to those generated by displacement synthesis when DNA polymerase encounters the 5'-end of a downstream Okazaki fragment. Required for DNA mismatch repair (MMR). In Xenopus laevis (African clawed frog), this protein is Exonuclease 1 (exo1).